The chain runs to 178 residues: MTQLSSSDVPGMGRRQFMNLLTFGSVTGVALGALYPVANYFIPPKAAGSGGGTSAKDELGNPITASGWLSSHPEGDRSLVQGLKGDPTYLIVEGEDAIGSYGINAICTHLGCVVPWNSGANKFMCPCHGSQYDSTGKVVRGPAPLSLALANVSVENDNVFVSQWTETDFRTGDKPWWA.

A helical membrane pass occupies residues 20-42; it reads LLTFGSVTGVALGALYPVANYFI. The region spanning 65-161 is the Rieske domain; the sequence is ASGWLSSHPE…VSVENDNVFV (97 aa). [2Fe-2S] cluster-binding residues include C107, H109, C125, and H128. Residues C112 and C127 are joined by a disulfide bond.

The protein belongs to the Rieske iron-sulfur protein family. In terms of assembly, the 4 large subunits of the cytochrome b6-f complex are cytochrome b6, subunit IV (17 kDa polypeptide, PetD), cytochrome f and the Rieske protein, while the 4 small subunits are PetG, PetL, PetM and PetN. The complex functions as a dimer. It depends on [2Fe-2S] cluster as a cofactor.

It is found in the cellular thylakoid membrane. The enzyme catalyses 2 oxidized [plastocyanin] + a plastoquinol + 2 H(+)(in) = 2 reduced [plastocyanin] + a plastoquinone + 4 H(+)(out). Its function is as follows. Component of the cytochrome b6-f complex, which mediates electron transfer between photosystem II (PSII) and photosystem I (PSI), cyclic electron flow around PSI, and state transitions. The sequence is that of Cytochrome b6-f complex iron-sulfur subunit from Synechococcus sp. (strain CC9605).